The sequence spans 42 residues: uncharacterized protein (42 aa).

This is an uncharacterized protein from Musa (BBTV).